The chain runs to 125 residues: Protein ApaG (125 aa).

Residues 1–125 (MINSPRVCIQ…FRLAVPTLIH (125 aa)) form the ApaG domain.

The polypeptide is Protein ApaG (Citrobacter koseri (strain ATCC BAA-895 / CDC 4225-83 / SGSC4696)).